A 273-amino-acid chain; its full sequence is Large ribosomal subunit protein uL2cz/uL2cy (273 aa).

Disordered stretches follow at residues 1–25 and 224–273; these read MAIHLYKTSTSSTRNGAVDSQVKSN and NPVD…RRRK.

It belongs to the universal ribosomal protein uL2 family. In terms of assembly, part of the 50S ribosomal subunit.

It localises to the plastid. Its subcellular location is the chloroplast. This Phalaenopsis aphrodite subsp. formosana (Moth orchid) protein is Large ribosomal subunit protein uL2cz/uL2cy (rpl2-A).